The following is a 104-amino-acid chain: Pyrimidine/purine nucleoside phosphorylase (104 aa).

It belongs to the nucleoside phosphorylase PpnP family.

It carries out the reaction a purine D-ribonucleoside + phosphate = a purine nucleobase + alpha-D-ribose 1-phosphate. The catalysed reaction is adenosine + phosphate = alpha-D-ribose 1-phosphate + adenine. It catalyses the reaction cytidine + phosphate = cytosine + alpha-D-ribose 1-phosphate. The enzyme catalyses guanosine + phosphate = alpha-D-ribose 1-phosphate + guanine. It carries out the reaction inosine + phosphate = alpha-D-ribose 1-phosphate + hypoxanthine. The catalysed reaction is thymidine + phosphate = 2-deoxy-alpha-D-ribose 1-phosphate + thymine. It catalyses the reaction uridine + phosphate = alpha-D-ribose 1-phosphate + uracil. The enzyme catalyses xanthosine + phosphate = alpha-D-ribose 1-phosphate + xanthine. In terms of biological role, catalyzes the phosphorolysis of diverse nucleosides, yielding D-ribose 1-phosphate and the respective free bases. Can use uridine, adenosine, guanosine, cytidine, thymidine, inosine and xanthosine as substrates. Also catalyzes the reverse reactions. The polypeptide is Pyrimidine/purine nucleoside phosphorylase (Geotalea daltonii (strain DSM 22248 / JCM 15807 / FRC-32) (Geobacter daltonii)).